We begin with the raw amino-acid sequence, 449 residues long: PC-esterase domain-containing protein 1A (449 aa).

This sequence belongs to the PC-esterase family.

This Mus musculus (Mouse) protein is PC-esterase domain-containing protein 1A (Pced1a).